The sequence spans 856 residues: MATYMSTICFGSFECKLPYSPASCGHIVKEREVPASVDPFADLETQLSARLRKQEYATVRVLKNGTFTYRYKTDAQIMRIQKKLERKDREEYHFQMAAPSIVSKITIAGGDPPSKSEPQAPRGIIHTTPKVRKVKTRPIIKLTEGQMNHLIKQVKQIMSEKRGSVHLISKKTTHVQYKEILGATRAAVRTAHMMGLRRRVDFRCDTWTVGLLQRLARTDKWSNQVRTIHVRRGDSGVILNTKSLKGHFGRSSGDLFIVRGSHEGKLYDARSRVTQSVLNSMIQFSNADNFWKGLDGNWARMRYPSDHTCVAGLPVADCGRVAALTRHSILPCYKITCPTCAQQYASLPVSDLFKLLHKHARDGLNRLGADKDRFIHVNKFLMALEHLTEPVDLNLELFNEIFKSIGEKQQAPFKNLNVLNNFFLKGKENTAHEWQVAQLSLLELARFQKNRTDNIKKGDISFFRNKLSARANWNLYLSCDNQLDKNANFLWGQREYHAKRFFSNFFDEIDPAKGYSAYEIRKHPNGTRKLSIGNLVVPLDLAEFRQKMKGDYRKQPGVSRKCTSSKDGNYVYPCCCTTLDDGSAIESTFYPPTKKHLVIGNSGDQKFVDLPKGDSEMLYIAKQGYCYINVFLAMLINISEEDAKDFTKKVRDMCVPKLGTWPTMMDLATTCAQMRIFYPDVHDAELPRILVDHDTQTCHVVDSFGSQTTGYHILKASSVSQLILFANDELESDIKHYRVGGVPNACPELGSTISPFREGGVIMSESAALKLLLKGIFRPRVMRQLLLDEPYLLILSILSPGILMAMYNNGIFELAVRLWINEKQSIAMIASLLSALALRVSAAETLVAQRIIIDAA.

Residues 141 to 284 (KLTEGQMNHL…QSVLNSMIQF (144 aa)) enclose the Peptidase S30 domain. Residues H192, D201, and S235 each act as for P1 proteinase activity in the active site. Positions 334 to 337 (KITC) match the Involved in interaction with stylet and aphid transmission motif. Positions 592–594 (PTK) match the Involved in virions binding and aphid transmission motif. In terms of domain architecture, Peptidase C6 spans 618–740 (LYIAKQGYCY…ESDIKHYRVG (123 aa)). Catalysis depends on for helper component proteinase activity residues C626 and H699.

Belongs to the potyviridae genome polyprotein family. Genome polyprotein of potyviruses undergoes post-translational proteolytic processing by the main proteinase NIa-pro resulting in the production of at least ten individual proteins. The P1 proteinase and the HC-pro cleave only their respective C-termini autocatalytically. 6K1 is essential for proper proteolytic separation of P3 from CI.

It catalyses the reaction Hydrolyzes a Gly-|-Gly bond at its own C-terminus, commonly in the sequence -Tyr-Xaa-Val-Gly-|-Gly, in the processing of the potyviral polyprotein.. Required for aphid transmission and also has proteolytic activity. Only cleaves a Gly-Gly dipeptide at its own C-terminus. Interacts with virions and aphid stylets. Acts as a suppressor of RNA-mediated gene silencing, also known as post-transcriptional gene silencing (PTGS), a mechanism of plant viral defense that limits the accumulation of viral RNAs. May have RNA-binding activity. The protein is Genome polyprotein of Potato virus Y (strain O) (PVY).